The primary structure comprises 243 residues: Peptidyl-tRNA hydrolase (243 aa).

Tyr14 lines the tRNA pocket. The Proton acceptor role is filled by His19. TRNA-binding residues include Phe64, Asn66, and Asn112. Residues 190-205 show a composition bias toward basic and acidic residues; it reads KAEEEKPAKEMKDAGK. Residues 190–243 are disordered; sequence KAEEEKPAKEMKDAGKKPASQSHIHQARNHNQPKLPATGPMADMLKKMFGKKGD. Polar residues predominate over residues 208-221; it reads ASQSHIHQARNHNQ.

The protein belongs to the PTH family. In terms of assembly, monomer.

The protein resides in the cytoplasm. The catalysed reaction is an N-acyl-L-alpha-aminoacyl-tRNA + H2O = an N-acyl-L-amino acid + a tRNA + H(+). Hydrolyzes ribosome-free peptidyl-tRNAs (with 1 or more amino acids incorporated), which drop off the ribosome during protein synthesis, or as a result of ribosome stalling. In terms of biological role, catalyzes the release of premature peptidyl moieties from peptidyl-tRNA molecules trapped in stalled 50S ribosomal subunits, and thus maintains levels of free tRNAs and 50S ribosomes. The chain is Peptidyl-tRNA hydrolase from Rhizobium johnstonii (strain DSM 114642 / LMG 32736 / 3841) (Rhizobium leguminosarum bv. viciae).